Here is a 282-residue protein sequence, read N- to C-terminus: sn-glycerol-3-phosphate transport system permease protein UgpE (282 aa).

6 consecutive transmembrane segments (helical) span residues 14–34 (LILI…FVAS), 86–106 (MAIA…IVFF), 112–132 (MFFF…RILP), 146–168 (YAGL…QFFL), 201–221 (IAAL…WPLL), and 248–268 (WNYV…VVVL). One can recognise an ABC transmembrane type-1 domain in the interval 78–269 (LWNSFVVAMA…IPPILVVVLM (192 aa)).

Belongs to the binding-protein-dependent transport system permease family. In terms of assembly, the complex is composed of two ATP-binding proteins (UgpC), two transmembrane proteins (UgpA and UgpE) and a solute-binding protein (UgpB).

Its subcellular location is the cell inner membrane. In terms of biological role, part of the ABC transporter complex UgpBAEC involved in sn-glycerol-3-phosphate (G3P) import. Probably responsible for the translocation of the substrate across the membrane. The protein is sn-glycerol-3-phosphate transport system permease protein UgpE (ugpE) of Brucella melitensis biotype 1 (strain ATCC 23456 / CCUG 17765 / NCTC 10094 / 16M).